We begin with the raw amino-acid sequence, 325 residues long: Ribose-phosphate pyrophosphokinase 4 (325 aa).

Mg(2+) is bound by residues Asp-145 and His-147. The segment at 228-243 (GRHVVIVDDLVQSGGT) is binding of phosphoribosylpyrophosphate.

Belongs to the ribose-phosphate pyrophosphokinase family. Requires Mg(2+) as cofactor.

The enzyme catalyses D-ribose 5-phosphate + ATP = 5-phospho-alpha-D-ribose 1-diphosphate + AMP + H(+). The protein is Ribose-phosphate pyrophosphokinase 4 of Oryza sativa subsp. japonica (Rice).